We begin with the raw amino-acid sequence, 25 residues long: Putative cytochrome c4 (25 aa).

A disordered region spans residues 1-25 (QEDIEAGKQKSATCTACHGQEGNST). 2 residues coordinate heme: C14 and C17.

In terms of processing, binds 2 heme groups per subunit.

The protein localises to the periplasm. Diheme, high potential cytochrome c believed to be an intermediate electron donor to terminal oxidation systems. This chain is Putative cytochrome c4, found in Aliivibrio fischeri (Vibrio fischeri).